The primary structure comprises 225 residues: MVAFEKLEKLLGYSFKNKELLIEALSHPSLRQHHEYKDDKDYERLEFLGDAVLNLVVTEILFKNFANYNEGNLAKIRSYLVCKETICVVGTKLTLKDYIIMTHGEEVAGGRDNPNNIENATEALIAAIYLDSNIETTRNIIGKLWAEFIKIQNLTDYDPKTALQEWAQASSHHLPIYRLIKREGAAHSSTFTVLVKVKDYKQIGTGHSIKEAEKNAARKLLHKLK.

Residues 4-133 (FEKLEKLLGY…LIAAIYLDSN (130 aa)) enclose the RNase III domain. A Mg(2+)-binding site is contributed by glutamate 46. Aspartate 50 is a catalytic residue. Residues asparagine 119 and glutamate 122 each contribute to the Mg(2+) site. Glutamate 122 is an active-site residue. A DRBM domain is found at 158-225 (DPKTALQEWA…AARKLLHKLK (68 aa)).

This sequence belongs to the ribonuclease III family. Homodimer. Mg(2+) is required as a cofactor.

It localises to the cytoplasm. The enzyme catalyses Endonucleolytic cleavage to 5'-phosphomonoester.. Digests double-stranded RNA. Involved in the processing of primary rRNA transcript to yield the immediate precursors to the large and small rRNAs (23S and 16S). Processes some mRNAs, and tRNAs when they are encoded in the rRNA operon. Processes pre-crRNA and tracrRNA of type II CRISPR loci if present in the organism. The protein is Ribonuclease 3 of Rickettsia felis (strain ATCC VR-1525 / URRWXCal2) (Rickettsia azadi).